The primary structure comprises 552 residues: CTP synthase (552 aa).

The interval 1–270 is amidoligase domain; that stretch reads MTKFVFVTGG…DGLICDKLRL (270 aa). Position 13 (Ser13) interacts with CTP. A UTP-binding site is contributed by Ser13. ATP-binding positions include 14–19 and Asp71; that span reads SLGKGI. Mg(2+) is bound by residues Asp71 and Glu144. CTP contacts are provided by residues 151–153, 191–196, and Lys227; these read DIE and KTKPTQ. UTP contacts are provided by residues 191 to 196 and Lys227; that span reads KTKPTQ. Residues 295–548 form the Glutamine amidotransferase type-1 domain; the sequence is KIAMVGKYVE…VKAAIERQKA (254 aa). Gly357 is an L-glutamine binding site. The active-site Nucleophile; for glutamine hydrolysis is Cys384. L-glutamine contacts are provided by residues 385–388, Glu408, and Arg474; that span reads LGMQ. Active-site residues include His521 and Glu523.

Belongs to the CTP synthase family. As to quaternary structure, homotetramer.

It carries out the reaction UTP + L-glutamine + ATP + H2O = CTP + L-glutamate + ADP + phosphate + 2 H(+). The catalysed reaction is L-glutamine + H2O = L-glutamate + NH4(+). The enzyme catalyses UTP + NH4(+) + ATP = CTP + ADP + phosphate + 2 H(+). It functions in the pathway pyrimidine metabolism; CTP biosynthesis via de novo pathway; CTP from UDP: step 2/2. Its activity is regulated as follows. Allosterically activated by GTP, when glutamine is the substrate; GTP has no effect on the reaction when ammonia is the substrate. The allosteric effector GTP functions by stabilizing the protein conformation that binds the tetrahedral intermediate(s) formed during glutamine hydrolysis. Inhibited by the product CTP, via allosteric rather than competitive inhibition. Functionally, catalyzes the ATP-dependent amination of UTP to CTP with either L-glutamine or ammonia as the source of nitrogen. Regulates intracellular CTP levels through interactions with the four ribonucleotide triphosphates. This is CTP synthase from Delftia acidovorans (strain DSM 14801 / SPH-1).